The sequence spans 379 residues: Glucose-1-phosphate adenylyltransferase (379 aa).

Alpha-D-glucose 1-phosphate-binding positions include G164, E179 to K180, and S190.

This sequence belongs to the bacterial/plant glucose-1-phosphate adenylyltransferase family. In terms of assembly, homotetramer.

It catalyses the reaction alpha-D-glucose 1-phosphate + ATP + H(+) = ADP-alpha-D-glucose + diphosphate. The protein operates within glycan biosynthesis; glycogen biosynthesis. Functionally, involved in the biosynthesis of ADP-glucose, a building block required for the elongation reactions to produce glycogen. Catalyzes the reaction between ATP and alpha-D-glucose 1-phosphate (G1P) to produce pyrophosphate and ADP-Glc. In Streptococcus equi subsp. zooepidemicus (strain H70), this protein is Glucose-1-phosphate adenylyltransferase.